An 802-amino-acid chain; its full sequence is Leucine--tRNA ligase (802 aa).

The 'HIGH' region motif lies at 39–50 (PYPSGAGLHVGH). Positions 574–578 (KMSKS) match the 'KMSKS' region motif. Residue lysine 577 coordinates ATP.

This sequence belongs to the class-I aminoacyl-tRNA synthetase family.

It localises to the cytoplasm. The enzyme catalyses tRNA(Leu) + L-leucine + ATP = L-leucyl-tRNA(Leu) + AMP + diphosphate. The chain is Leucine--tRNA ligase from Macrococcus caseolyticus (strain JCSC5402) (Macrococcoides caseolyticum).